The sequence spans 335 residues: DNA-directed RNA polymerase subunit alpha (335 aa).

Positions 1 to 233 (MTRTANEFLT…QQIAIFVDLQ (233 aa)) are alpha N-terminal domain (alpha-NTD). Residues 247-335 (VDPILLRPVD…MDDRFAYRSR (89 aa)) form an alpha C-terminal domain (alpha-CTD) region.

It belongs to the RNA polymerase alpha chain family. In terms of assembly, homodimer. The RNAP catalytic core consists of 2 alpha, 1 beta, 1 beta' and 1 omega subunit. When a sigma factor is associated with the core the holoenzyme is formed, which can initiate transcription.

It carries out the reaction RNA(n) + a ribonucleoside 5'-triphosphate = RNA(n+1) + diphosphate. Functionally, DNA-dependent RNA polymerase catalyzes the transcription of DNA into RNA using the four ribonucleoside triphosphates as substrates. This chain is DNA-directed RNA polymerase subunit alpha, found in Acinetobacter baylyi (strain ATCC 33305 / BD413 / ADP1).